Consider the following 94-residue polypeptide: Integration host factor subunit beta (94 aa).

The protein belongs to the bacterial histone-like protein family. Heterodimer of an alpha and a beta chain.

This protein is one of the two subunits of integration host factor, a specific DNA-binding protein that functions in genetic recombination as well as in transcriptional and translational control. The chain is Integration host factor subunit beta from Yersinia pseudotuberculosis serotype O:1b (strain IP 31758).